We begin with the raw amino-acid sequence, 115 residues long: C-C motif chemokine 6 (115 aa).

The signal sequence occupies residues 1–21; sequence MRHSKTAISFFILVAVLGSQA. Disulfide bonds link Cys-49/Cys-72, Cys-50/Cys-88, and Cys-59/Cys-99.

This sequence belongs to the intercrine beta (chemokine CC) family.

It localises to the secreted. The polypeptide is C-C motif chemokine 6 (Ccl6) (Rattus norvegicus (Rat)).